We begin with the raw amino-acid sequence, 399 residues long: Tyrosine--tRNA ligase 2 (399 aa).

The 'HIGH' region signature appears at 42-51 (PTAPDLHLGH). The short motif at 226–230 (KMSKS) is the 'KMSKS' region element. Residue lysine 229 participates in ATP binding. Residues 336–396 (MPVASVLNKA…GKKAFARITL (61 aa)) enclose the S4 RNA-binding domain.

The protein belongs to the class-I aminoacyl-tRNA synthetase family. TyrS type 2 subfamily. Homodimer.

The protein localises to the cytoplasm. It carries out the reaction tRNA(Tyr) + L-tyrosine + ATP = L-tyrosyl-tRNA(Tyr) + AMP + diphosphate + H(+). Its function is as follows. Catalyzes the attachment of tyrosine to tRNA(Tyr) in a two-step reaction: tyrosine is first activated by ATP to form Tyr-AMP and then transferred to the acceptor end of tRNA(Tyr). This is Tyrosine--tRNA ligase 2 from Pseudomonas aeruginosa (strain ATCC 15692 / DSM 22644 / CIP 104116 / JCM 14847 / LMG 12228 / 1C / PRS 101 / PAO1).